We begin with the raw amino-acid sequence, 559 residues long: Membrane protein insertase YidC (559 aa).

A helical membrane pass occupies residues 6-26 (TVLWMIFSFSLLLLWNNWQIH). The tract at residues 34–80 (GGPSPEQNAPATANNQAATNPASNTPAVPNAPAATSAPSSVPGSTAP) is disordered. Positions 42 to 80 (APATANNQAATNPASNTPAVPNAPAATSAPSSVPGSTAP) are enriched in low complexity. The next 4 helical transmembrane spans lie at 367 to 387 (LLGN…AVFY), 441 to 461 (LPMV…LASV), 480 to 500 (PYFI…KLNP), and 510 to 530 (VMMV…AGLV).

This sequence belongs to the OXA1/ALB3/YidC family. Type 1 subfamily. In terms of assembly, interacts with the Sec translocase complex via SecD. Specifically interacts with transmembrane segments of nascent integral membrane proteins during membrane integration.

It localises to the cell inner membrane. Functionally, required for the insertion and/or proper folding and/or complex formation of integral membrane proteins into the membrane. Involved in integration of membrane proteins that insert both dependently and independently of the Sec translocase complex, as well as at least some lipoproteins. Aids folding of multispanning membrane proteins. This Bordetella avium (strain 197N) protein is Membrane protein insertase YidC.